The following is a 2524-amino-acid chain: Neurogenic locus notch homolog protein 1 (2524 aa).

A signal peptide spans 1–19 (MDRIGLAVLLCSLPVLTQG). 4 consecutive EGF-like domains span residues 20–57 (LRCT…ERCQ), 58–99 (FPNP…KVCL), 102–140 (VDNA…DSCQ), and 141–177 (QADP…ATCK). Residues 20–1729 (LRCTQTAEMC…METPKPSTLY (1710 aa)) are Extracellular-facing. 33 disulfide bridges follow: Cys-22–Cys-35, Cys-29–Cys-45, Cys-47–Cys-56, Cys-62–Cys-74, Cys-68–Cys-87, Cys-89–Cys-98, Cys-106–Cys-117, Cys-111–Cys-128, Cys-130–Cys-139, Cys-145–Cys-156, Cys-150–Cys-165, Cys-167–Cys-176, Cys-183–Cys-194, Cys-188–Cys-203, Cys-205–Cys-214, Cys-221–Cys-232, Cys-226–Cys-242, Cys-244–Cys-253, Cys-260–Cys-271, Cys-265–Cys-280, Cys-282–Cys-291, Cys-298–Cys-311, Cys-305–Cys-320, Cys-322–Cys-331, Cys-338–Cys-349, Cys-343–Cys-358, Cys-360–Cys-369, Cys-375–Cys-386, Cys-380–Cys-397, Cys-399–Cys-408, Cys-415–Cys-428, Cys-422–Cys-437, and Cys-439–Cys-448. Positions 179 to 215 (DINECSQNPCKNGGQCINEFGSYRCTCQNRFTGRNCD) constitute an EGF-like 5; calcium-binding domain. The 38-residue stretch at 217–254 (PYVPCNPSPCLNGGTCRQTDDTSYDCTCLPGFSGQNCE) folds into the EGF-like 6 domain. The O-linked (Fuc...) threonine; alternate glycan is linked to Thr-231. O-linked (GalNAc...) threonine; alternate glycosylation occurs at Thr-231. The EGF-like 7; calcium-binding domain occupies 256-292 (NIDDCPSNNCRNGGTCVDGVNTYNCQCPPDWTGQYCT). Positions 294–332 (DVDECQLMPNACQNGGTCHNTYGGYNCVCVNGWTGEDCS) constitute an EGF-like 8; calcium-binding domain. Positions 334-370 (NIDDCANAACHSGATCHDRVASFYCECPHGRTGLLCH) constitute an EGF-like 9; calcium-binding domain. The EGF-like 10 domain maps to 371–409 (LDNACISNPCNEGSNCDTNPVNGKAICTCPPGYTGPACN). The region spanning 411–449 (DVDECSLGANPCEHGGRCTNTLGSFQCNCPQGYAGPRCE) is the EGF-like 11; calcium-binding domain. The Ca(2+) site is built by Thr-431 and Ser-434. The O-linked (Glc...) serine glycan is linked to Ser-434. Residues Asp-451, Val-452, and Glu-454 each contribute to the Ca(2+) site. The region spanning 451 to 487 (DVNECLSNPCQNDSTCLDQIGEFQCICMPGYEGLYCE) is the EGF-like 12; calcium-binding domain. Disulfide bonds link Cys-455–Cys-466, Cys-460–Cys-475, and Cys-477–Cys-486. Ser-457 carries an O-linked (Glc...) serine glycan. N-linked (GlcNAc...) asparagine glycosylation occurs at Asn-462. Thr-465 carries an O-linked (Fuc...) threonine glycan. 2 residues coordinate Ca(2+): Asp-468 and Gln-469. Residues Asn-489, Ile-490, and Glu-492 each coordinate Ca(2+). The 37-residue stretch at 489–525 (NIDECASNPCLHNGKCIDKINEFRCDCPTGFSGNLCQ) folds into the EGF-like 13; calcium-binding domain. Intrachain disulfides connect Cys-493–Cys-504, Cys-498–Cys-513, Cys-515–Cys-524, Cys-531–Cys-542, Cys-536–Cys-551, Cys-553–Cys-562, Cys-569–Cys-579, Cys-574–Cys-588, Cys-590–Cys-599, Cys-606–Cys-617, Cys-611–Cys-626, Cys-628–Cys-637, Cys-644–Cys-654, Cys-649–Cys-663, Cys-665–Cys-674, Cys-681–Cys-692, Cys-686–Cys-701, Cys-703–Cys-712, Cys-719–Cys-729, Cys-724–Cys-738, Cys-740–Cys-749, Cys-756–Cys-767, Cys-761–Cys-776, Cys-778–Cys-787, Cys-794–Cys-805, Cys-799–Cys-814, Cys-816–Cys-825, Cys-832–Cys-843, Cys-837–Cys-854, Cys-856–Cys-865, Cys-872–Cys-883, Cys-877–Cys-892, Cys-894–Cys-903, Cys-910–Cys-921, Cys-915–Cys-930, Cys-932–Cys-941, Cys-948–Cys-959, Cys-953–Cys-968, Cys-970–Cys-979, Cys-986–Cys-997, Cys-991–Cys-1006, Cys-1008–Cys-1017, Cys-1024–Cys-1035, Cys-1029–Cys-1044, Cys-1046–Cys-1055, Cys-1062–Cys-1073, Cys-1067–Cys-1082, Cys-1084–Cys-1093, Cys-1100–Cys-1121, Cys-1115–Cys-1130, Cys-1132–Cys-1141, Cys-1148–Cys-1159, Cys-1153–Cys-1168, Cys-1170–Cys-1179, Cys-1186–Cys-1197, Cys-1191–Cys-1206, Cys-1208–Cys-1217, Cys-1224–Cys-1243, Cys-1237–Cys-1252, Cys-1254–Cys-1263, Cys-1270–Cys-1283, Cys-1275–Cys-1292, Cys-1294–Cys-1303, Cys-1310–Cys-1321, Cys-1315–Cys-1333, Cys-1335–Cys-1344, Cys-1351–Cys-1362, Cys-1356–Cys-1371, Cys-1373–Cys-1382, Cys-1390–Cys-1401, Cys-1395–Cys-1412, Cys-1414–Cys-1423, Cys-1447–Cys-1470, Cys-1452–Cys-1465, and Cys-1461–Cys-1477. O-linked (Glc...) serine glycosylation occurs at Ser-495. Ca(2+) contacts are provided by Asp-506 and Lys-507. Residues 527–563 (DFDECTSTPCKNGAKCLDGPNSYTCQCTEGFTGRHCE) form the EGF-like 14; calcium-binding domain. In terms of domain architecture, EGF-like 15; calcium-binding spans 565 to 600 (DINECIPDPCHYGTCKDGIATFTCLCRPGYTGRLCD). The 37-residue stretch at 602–638 (DINECLSKPCLNGGQCTDRENGYICTCPKGTTGVNCE) folds into the EGF-like 16; calcium-binding domain. An EGF-like 17 domain is found at 640–675 (KIDDCASNLCDNGKCIDKIDGYECTCEPGYTGKLCN). In terms of domain architecture, EGF-like 18; calcium-binding spans 677-713 (NINECDSNPCRNGGTCKDQINGFTCVCPDGYHDHMCL). Positions 715–750 (EVNECNSNPCIHGACHDGVNGYKCDCEAGWSGSNCD) constitute an EGF-like 19; calcium-binding domain. The EGF-like 20; calcium-binding domain occupies 752 to 788 (NNNECESNPCMNGGTCKDMTGAYICTCKAGFSGPNCQ). In terms of domain architecture, EGF-like 21; calcium-binding spans 790-826 (NINECSSNPCLNHGTCIDDVAGYKCNCMLPYTGAICE). Residues 828–866 (VLAPCAGSPCKNGGRCKESEDFETFSCECPPGWQGQTCE) enclose the EGF-like 22 domain. The EGF-like 23; calcium-binding domain occupies 868–904 (DMNECVNRPCRNGATCQNTNGSYKCNCKPGYTGRNCE). Asn-887 carries an N-linked (GlcNAc...) asparagine glycan. The 37-residue stretch at 906 to 942 (DIDDCQPNPCHNGGSCSDGINMFFCNCPAGFRGPKCE) folds into the EGF-like 24; calcium-binding domain. Residues 944-980 (DINECASNPCKNGANCTDCVNSYTCTCQPGFSGIHCE) enclose the EGF-like 25; calcium-binding domain. Asn-958 is a glycosylation site (N-linked (GlcNAc...) asparagine). One can recognise an EGF-like 26 domain in the interval 982-1018 (NTPDCTESSCFNGGTCIDGINTFTCQCPPGFTGSYCQ). Residues 1020-1056 (DINECDSKPCLNGGTCQDSYGTYKCTCPQGYTGLNCQ) form the EGF-like 27; calcium-binding domain. EGF-like domains lie at 1058–1094 (LVRW…VYCD) and 1096–1142 (PSVS…SYCE). In terms of domain architecture, EGF-like 30; calcium-binding spans 1144 to 1180 (QVDECSPNPCQNGATCTDYLGGYSCECVAGYHGVNCS). N-linked (GlcNAc...) asparagine glycosylation occurs at Asn-1178. An EGF-like 31; calcium-binding domain is found at 1182–1218 (EINECLSHPCQNGGTCIDLINTYKCSCPRGTQGVHCE). Positions 1220–1264 (NVDDCTPFYDSFTLEPKCFNNGKCIDRVGGYNCICPPGFVGERCE) constitute an EGF-like 32; calcium-binding domain. EGF-like domains are found at residues 1266–1304 (DVNE…RRCE), 1306–1346 (VVDG…TCEY), 1347–1383 (DSRT…ATCQ), and 1386–1424 (VISP…LFCH). Thr-1400 carries O-linked (Fuc...) threonine; alternate glycosylation. Thr-1400 carries O-linked (GalNAc...) threonine; alternate glycosylation. LNR repeat units lie at residues 1447–1487 (CENE…PWKN), 1488–1529 (CTQS…CNPL), and 1530–1564 (YDQY…NMPE). N-linked (GlcNAc...) asparagine glycosylation occurs at Asn-1487. 5 disulfides stabilise this stretch: Cys-1488–Cys-1512, Cys-1494–Cys-1507, Cys-1503–Cys-1519, Cys-1534–Cys-1547, and Cys-1543–Cys-1559. An N-linked (GlcNAc...) asparagine glycan is attached at Asn-1508. N-linked (GlcNAc...) asparagine glycosylation occurs at Asn-1584. The chain crosses the membrane as a helical span at residues 1730–1750 (PMLSMLVIPLLIIFVFMMVIV). Residues 1751–2524 (NKKRRREHGQ…QRTHIPEAFK (774 aa)) are Cytoplasmic-facing. 6 ANK repeats span residues 1876–1919 (DGFT…QLHN), 1924–1953 (TGET…DANV), 1957–1987 (MGRT…DLDA), 1991–2020 (DGTT…DVNA), 2024–2053 (FGKS…NKDM), and 2057–2086 (KEET…NRDI). 3 disordered regions span residues 2144 to 2230 (NMKP…LNHL), 2369 to 2407 (MQAQ…FCSS), and 2451 to 2524 (LTPP…EAFK). Composition is skewed to polar residues over residues 2180–2192 (GKTT…SSGV) and 2208–2230 (DVSS…LNHL). Over residues 2369 to 2394 (MQAQQMQQQQNLQLHQSMQQQHHNSS) the composition is skewed to low complexity. Composition is skewed to polar residues over residues 2395 to 2407 (TTST…FCSS) and 2451 to 2471 (LTPP…SHQL). A compositionally biased stretch (low complexity) spans 2481 to 2496 (PSPESPDQWSSSSPHS). The span at 2497–2516 (NMSDWSEGISSPPTSMQPQR) shows a compositional bias: polar residues.

The protein belongs to the NOTCH family. In terms of assembly, forms a ternary complex with nrarp and rbpj/suh. Post-translationally, O-glycosylated on the EGF-like domains. Contains both O-linked fucose and O-linked glucose. O-linked glycosylation by galnt11 is involved in determination of left/right symmetry: glycosylation promotes activation of notch1, possibly by promoting cleavage by adam17, modulating the balance between motile and immotile (sensory) cilia at the left-right organiser (LRO). In terms of processing, synthesized in the endoplasmic reticulum as an inactive form which is proteolytically cleaved by a furin-like convertase in the trans-Golgi network before it reaches the plasma membrane to yield an active, ligand-accessible form. Cleavage results in a C-terminal fragment N(TM) and a N-terminal fragment N(EC). Following ligand binding, it is cleaved by adam17 to yield a membrane-associated intermediate fragment called notch extracellular truncation (NEXT). Following endocytosis, this fragment is then cleaved by presenilin dependent gamma-secretase to release a Notch-derived peptide containing the intracellular domain (NICD) from the membrane.

It localises to the cell membrane. The protein resides in the nucleus. Functions as a receptor for membrane-bound ligands Jagged-1 (JAG1), Jagged-2 (JAG2) and Delta-1 (DLL1) to regulate cell-fate determination. Upon ligand activation through the released notch intracellular domain (NICD) it forms a transcriptional activator complex with RBPJ/RBPSUH and activates genes of the enhancer of split locus. Affects the implementation of differentiation, proliferation and apoptotic programs. Involved in angiogenesis; negatively regulates endothelial cell proliferation and migration and angiogenic sprouting. Involved in the maturation of both CD4(+) and CD8(+) cells in the thymus. Important for follicular differentiation and possibly cell fate selection within the follicle. During cerebellar development, functions as a receptor for neuronal DNER and is involved in the differentiation of Bergmann glia. Represses neuronal and myogenic differentiation. May play an essential role in postimplantation development, probably in some aspect of cell specification and/or differentiation. May be involved in mesoderm development, somite formation and neurogenesis. Involved in determination of left/right symmetry by modulating the balance between motile and immotile (sensory) cilia at the left-right organiser (LRO). In Xenopus laevis (African clawed frog), this protein is Neurogenic locus notch homolog protein 1 (notch1).